A 279-amino-acid chain; its full sequence is Undecaprenyl-diphosphatase (279 aa).

8 helical membrane-spanning segments follow: residues 2–22, 44–64, 85–105, 113–133, 163–183, 188–208, 223–243, and 255–275; these read LIIE…TEWL, AFIE…VMLI, WQLW…AVPL, FYFM…FIWI, VLSI…AIIL, TVAA…YSGL, AQVL…LLAI, and FTIF…YSFF.

This sequence belongs to the UppP family.

Its subcellular location is the cell membrane. It carries out the reaction di-trans,octa-cis-undecaprenyl diphosphate + H2O = di-trans,octa-cis-undecaprenyl phosphate + phosphate + H(+). In terms of biological role, catalyzes the dephosphorylation of undecaprenyl diphosphate (UPP). Confers resistance to bacitracin. This Streptococcus pyogenes serotype M5 (strain Manfredo) protein is Undecaprenyl-diphosphatase.